The primary structure comprises 148 residues: UPF0756 membrane protein Ent638_1667 (148 aa).

4 consecutive transmembrane segments (helical) span residues 14-34, 51-71, 86-106, and 121-141; these read ALGF…LIIV, LTIG…SGTL, LIAI…VTLM, and VLGV…AGLV.

This sequence belongs to the UPF0756 family.

It is found in the cell membrane. This Enterobacter sp. (strain 638) protein is UPF0756 membrane protein Ent638_1667.